The chain runs to 358 residues: Snurportin-1 (358 aa).

M1 bears the N-acetylmethionine mark. Disordered stretches follow at residues 1-39 and 69-89; these read MEEL…SSLE and DWTG…EMDL. Residues 1-65 form a necessary for interaction with KPNB1 and m3G-cap U1 and U5 snRNP import receptor activity region; that stretch reads MEELSQALAS…LDYVNHARRL (65 aa). Positions 1–160 are necessary for interaction with XPO1; sequence MEELSQALAS…NRFSSLLPGG (160 aa). Composition is skewed to polar residues over residues 7 to 22 and 30 to 39; these read ALAS…NSTA and QYKSKYSSLE. One can recognise an IBB domain in the interval 11–73; it reads SFSVSQELNS…RLAEDDWTGM (63 aa). Position 75 is a phosphoserine (S75). Positions 128–130 are interaction with m3G-cap structure; the sequence is GKR. A necessary for binding to the m3G-cap structure region spans residues 210–329; sequence MNSKLPEEEG…DTKEKLTHKA (120 aa). Basic and acidic residues predominate over residues 315-341; that stretch reads KRSQEDTKEKLTHKASENGHYELEHLS. A disordered region spans residues 315 to 358; it reads KRSQEDTKEKLTHKASENGHYELEHLSTPKLRSPPHSSESLMDS. Over residues 349 to 358 the composition is skewed to polar residues; the sequence is PHSSESLMDS. Position 351 is a phosphoserine (S351).

This sequence belongs to the snurportin family. In terms of assembly, component of an import snRNP complex composed of KPNB1, SNUPN, SMN1 and ZNF259. Component of a nuclear export receptor complex composed of KPNB1, Ran, SNUPN and XPO1. Found in a trimeric export complex with SNUPN, Ran and XPO1. Interacts (via IBB domain) with KPNB1; the interaction is direct. Interacts with DDX20, IPO7, SMN1, SNRPB and XPO1. Interacts directly with XPO1. Its interaction with XPO1 and binding to m3G-cap U snRNPs appears to be mutually exclusive. Can form homomers.

It localises to the nucleus. Its subcellular location is the cytoplasm. In terms of biological role, functions as an U snRNP-specific nuclear import adapter. Involved in the trimethylguanosine (m3G)-cap-dependent nuclear import of U snRNPs. Binds specifically to the terminal m3G-cap U snRNAs. The protein is Snurportin-1 (Snupn) of Rattus norvegicus (Rat).